Here is a 177-residue protein sequence, read N- to C-terminus: MKSRIHVLQGDITQLAVDVIVNAANSSLMGGGGVDGAIHRAAGPELLEACQKVRRQQGECPTGHAVITIAGNLPARAVIHTVGPVWRDGEHNEDQLLHDAYLNSLKLAQANGYKSIAFPAISTGVYGFPRAAAAEIAVKTVSDFITRHALPEQIYFVCYDEENSRLYNRLLTQQGDE.

One can recognise a Macro domain in the interval 1–175 (MKSRIHVLQG…LYNRLLTQQG (175 aa)). Substrate-binding positions include 11-12 (DI), Asn25, 33-35 (GVD), and 122-126 (STGVY). The active-site Proton acceptor is Asp35.

It belongs to the MacroD-type family. YmdB subfamily. In terms of assembly, homodimer. Interacts with RNase III.

It catalyses the reaction 3''-O-acetyl-ADP-D-ribose + H2O = ADP-D-ribose + acetate + H(+). The enzyme catalyses 2''-O-acetyl-ADP-D-ribose + H2O = ADP-D-ribose + acetate + H(+). Its function is as follows. Deacetylates O-acetyl-ADP ribose to yield ADP-ribose and free acetate. Down-regulates ribonuclease 3 (RNase III) activity. Acts by interacting directly with the region of the ribonuclease that is required for dimerization/activation. This is O-acetyl-ADP-ribose deacetylase from Escherichia fergusonii (strain ATCC 35469 / DSM 13698 / CCUG 18766 / IAM 14443 / JCM 21226 / LMG 7866 / NBRC 102419 / NCTC 12128 / CDC 0568-73).